The primary structure comprises 222 residues: 2-C-methyl-D-erythritol 4-phosphate cytidylyltransferase (222 aa).

It belongs to the IspD/TarI cytidylyltransferase family. IspD subfamily.

The catalysed reaction is 2-C-methyl-D-erythritol 4-phosphate + CTP + H(+) = 4-CDP-2-C-methyl-D-erythritol + diphosphate. Its pathway is isoprenoid biosynthesis; isopentenyl diphosphate biosynthesis via DXP pathway; isopentenyl diphosphate from 1-deoxy-D-xylulose 5-phosphate: step 2/6. Functionally, catalyzes the formation of 4-diphosphocytidyl-2-C-methyl-D-erythritol from CTP and 2-C-methyl-D-erythritol 4-phosphate (MEP). This Thermotoga maritima (strain ATCC 43589 / DSM 3109 / JCM 10099 / NBRC 100826 / MSB8) protein is 2-C-methyl-D-erythritol 4-phosphate cytidylyltransferase.